The chain runs to 1023 residues: Vacuolar membrane protease (1023 aa).

The Cytoplasmic segment spans residues 1–80 (MRAAGCGGTG…FFRSVFGYRK (80 aa)). Over residues 17–48 (KLSRSISQHQPKSMPQASVNSEQNPSVPNSPS) the composition is skewed to polar residues. The disordered stretch occupies residues 17 to 59 (KLSRSISQHQPKSMPQASVNSEQNPSVPNSPSAHKPARSQSAQ). A helical membrane pass occupies residues 81–101 (TSLTFLVALVFAATLLLSWAD). Over 102–425 (SSLDFSVDMP…VVFSVSQVVS (324 aa)) the chain is Vacuolar. 2 N-linked (GlcNAc...) asparagine glycosylation sites follow: asparagine 170 and asparagine 200. Residues histidine 214 and aspartate 226 each coordinate Zn(2+). The Proton acceptor role is filled by glutamate 259. Residues glutamate 260, glutamate 285, and histidine 357 each coordinate Zn(2+). Residues 426–446 (ANIALLVVVPVASLLLLFIIF) form a helical membrane-spanning segment. At 447–461 (RCNKGWGFNFVNAIK) the chain is on the cytoplasmic side. A helical membrane pass occupies residues 462–482 (YPLSLVASVLVLTFVSQVIIV). Topologically, residues 483 to 491 (PSNPFLVNS) are vacuolar. N-linked (GlcNAc...) asparagine glycosylation is present at asparagine 490. The helical transmembrane segment at 492 to 512 (SIGLLVATLFSLFLLLNYIVL) threads the bilayer. At 513–529 (NGLNLVFKSFKGHQHDE) the chain is on the cytoplasmic side. A helical membrane pass occupies residues 530–550 (KLIVMCESSFLTWILLLWSTV). At 551 to 564 (KLSHNKFGDDHTGE) the chain is on the vacuolar side. A helical transmembrane segment spans residues 565–585 (LFIPILFSLQAVACFLGFLGW). At 586 to 643 (CFKPSKKVKVSREEHQPLLSSNGSNYGTQDDDDSLAPSSSLSLQSGFSENCEVHETKS) the chain is on the cytoplasmic side. Polar residues predominate over residues 604–613 (LSSNGSNYGT). Positions 604–626 (LSSNGSNYGTQDDDDSLAPSSSL) are disordered. Residues 644-664 (FSYDWLVQFLVIVPISSLIIF) form a helical membrane-spanning segment. At 665–687 (NSGSLILNGLNKSIQESLSAQNL) the chain is on the vacuolar side. N-linked (GlcNAc...) asparagine glycosylation is present at asparagine 675. Residues 688–708 (IYKFIQIFVIVWSIPFLPFIF) traverse the membrane as a helical segment. Residues 709–712 (KLNR) lie on the Cytoplasmic side of the membrane. Residues 713–733 (IIVLALSLVLLYGFFAVNITD) traverse the membrane as a helical segment. Topologically, residues 734 to 1023 (AFNDANPLKL…MVSVTKYIEV (290 aa)) are vacuolar. Asparagine 815, asparagine 858, and asparagine 892 each carry an N-linked (GlcNAc...) asparagine glycan.

This sequence belongs to the peptidase M28 family. Requires Zn(2+) as cofactor.

The protein localises to the vacuole membrane. Its function is as follows. May be involved in vacuolar sorting and osmoregulation. This chain is Vacuolar membrane protease, found in Clavispora lusitaniae (strain ATCC 42720) (Yeast).